The chain runs to 945 residues: Isoleucine--tRNA ligase (945 aa).

Residues 66 to 76 carry the 'HIGH' region motif; that stretch reads PYANGDIHLGH. Glu581 provides a ligand contact to L-isoleucyl-5'-AMP. A 'KMSKS' region motif is present at residues 622 to 626; sequence KMSKS. Lys625 provides a ligand contact to ATP. Zn(2+)-binding residues include Cys908, Cys911, Cys928, and Cys931.

The protein belongs to the class-I aminoacyl-tRNA synthetase family. IleS type 1 subfamily. As to quaternary structure, monomer. It depends on Zn(2+) as a cofactor.

The protein localises to the cytoplasm. It carries out the reaction tRNA(Ile) + L-isoleucine + ATP = L-isoleucyl-tRNA(Ile) + AMP + diphosphate. Its function is as follows. Catalyzes the attachment of isoleucine to tRNA(Ile). As IleRS can inadvertently accommodate and process structurally similar amino acids such as valine, to avoid such errors it has two additional distinct tRNA(Ile)-dependent editing activities. One activity is designated as 'pretransfer' editing and involves the hydrolysis of activated Val-AMP. The other activity is designated 'posttransfer' editing and involves deacylation of mischarged Val-tRNA(Ile). The protein is Isoleucine--tRNA ligase of Burkholderia lata (strain ATCC 17760 / DSM 23089 / LMG 22485 / NCIMB 9086 / R18194 / 383).